The chain runs to 685 residues: Mesothelin-like protein (685 aa).

An N-terminal signal peptide occupies residues 1–32 (MSRTLRPSAMGSRVGALASPGLALLLSLTAHC). Residues 33 to 627 (SGPQAKGLPK…GVSHTSGSPP (595 aa)) are Extracellular-facing. N-linked (GlcNAc...) asparagine glycans are attached at residues Asn-315 and Asn-400. The interval 603–624 (PPSSLIHSLDPPGNDGVSHTSG) is disordered. Residues 628 to 648 (VHLGYLSLAVALPSSLLWLLL) traverse the membrane as a helical segment. Residues 649-685 (CQLPSGQMATAHRTLGPMALAQGSWTPEHQIPEKRSC) lie on the Cytoplasmic side of the membrane.

The protein belongs to the mesothelin family.

Its subcellular location is the membrane. Functionally, may play a role in cellular adhesion. In Mus musculus (Mouse), this protein is Mesothelin-like protein (Mslnl).